The sequence spans 260 residues: 3'-5' ssDNA/RNA exonuclease TatD (260 aa).

3 residues coordinate a divalent metal cation: glutamate 92, histidine 128, and histidine 153.

The protein belongs to the metallo-dependent hydrolases superfamily. TatD-type hydrolase family. TatD subfamily. As to quaternary structure, monomer. Mg(2+) is required as a cofactor.

The protein resides in the cytoplasm. In terms of biological role, 3'-5' exonuclease that prefers single-stranded DNA and RNA. May play a role in the H(2)O(2)-induced DNA damage repair. The protein is 3'-5' ssDNA/RNA exonuclease TatD of Pantoea ananatis (strain LMG 20103).